Here is a 473-residue protein sequence, read N- to C-terminus: Photosystem II CP43 reaction center protein (473 aa).

The propeptide occupies Met1–Glu14. At Thr15 the chain carries N-acetylthreonine. A Phosphothreonine modification is found at Thr15. Transmembrane regions (helical) follow at residues Leu69–Ala93, Leu134–Asn155, Lys178–Thr200, Lys255–Ser275, and Trp291–Ala312. Glu367 is a [CaMn4O5] cluster binding site. A helical transmembrane segment spans residues Arg447–Pro471.

Belongs to the PsbB/PsbC family. PsbC subfamily. PSII is composed of 1 copy each of membrane proteins PsbA, PsbB, PsbC, PsbD, PsbE, PsbF, PsbH, PsbI, PsbJ, PsbK, PsbL, PsbM, PsbT, PsbX, PsbY, PsbZ, Psb30/Ycf12, at least 3 peripheral proteins of the oxygen-evolving complex and a large number of cofactors. It forms dimeric complexes. The cofactor is Binds multiple chlorophylls and provides some of the ligands for the Ca-4Mn-5O cluster of the oxygen-evolving complex. It may also provide a ligand for a Cl- that is required for oxygen evolution. PSII binds additional chlorophylls, carotenoids and specific lipids..

It is found in the plastid. The protein resides in the chloroplast thylakoid membrane. Its function is as follows. One of the components of the core complex of photosystem II (PSII). It binds chlorophyll and helps catalyze the primary light-induced photochemical processes of PSII. PSII is a light-driven water:plastoquinone oxidoreductase, using light energy to abstract electrons from H(2)O, generating O(2) and a proton gradient subsequently used for ATP formation. In Panax ginseng (Korean ginseng), this protein is Photosystem II CP43 reaction center protein.